We begin with the raw amino-acid sequence, 285 residues long: PHO85 cyclin-7 (285 aa).

Positions methionine 1–proline 14 are enriched in low complexity. The segment at methionine 1 to asparagine 42 is disordered. Residue serine 69 is modified to Phosphoserine.

It belongs to the cyclin family. PHO80 subfamily. In terms of assembly, forms a cyclin-CDK complex with PHO85. Interacts with the substrate proteins MMR1 and YJL084C. Interacts with the CDK inhibitor (CKI) PHO81.

Its subcellular location is the cytoplasm. The PCL7-PHO85 cyclin-CDK is inhibited by PHO81 in low-phosphate conditions. Its function is as follows. Cyclin partner of the cyclin-dependent kinase (CDK) PHO85. Together with cyclin PCL6, controls glycogen phosphorylase and glycogen synthase activities in response to nutrient availablility. The PCL7-PHO85 cyclin-CDK holoenzyme has GLC8 kinase activity and phosphorylates and inactivates the phosphatase PP1-2 inhibitor GLC8, causing activation of PP1-2, which then dephosphorylates and activates glycogen phosphorylase. PCL7-PHO85 also phosphorylates MMR1 and YJL084C. This is PHO85 cyclin-7 (PCL7) from Saccharomyces cerevisiae (strain ATCC 204508 / S288c) (Baker's yeast).